A 97-amino-acid chain; its full sequence is UPF0235 protein Ppha_2415 (97 aa).

The protein belongs to the UPF0235 family.

The chain is UPF0235 protein Ppha_2415 from Pelodictyon phaeoclathratiforme (strain DSM 5477 / BU-1).